An 872-amino-acid chain; its full sequence is Alanine--tRNA ligase (872 aa).

4 residues coordinate Zn(2+): His567, His571, Cys669, and His673.

This sequence belongs to the class-II aminoacyl-tRNA synthetase family. The cofactor is Zn(2+).

It is found in the cytoplasm. The enzyme catalyses tRNA(Ala) + L-alanine + ATP = L-alanyl-tRNA(Ala) + AMP + diphosphate. Functionally, catalyzes the attachment of alanine to tRNA(Ala) in a two-step reaction: alanine is first activated by ATP to form Ala-AMP and then transferred to the acceptor end of tRNA(Ala). Also edits incorrectly charged Ser-tRNA(Ala) and Gly-tRNA(Ala) via its editing domain. This chain is Alanine--tRNA ligase, found in Streptococcus sanguinis (strain SK36).